The sequence spans 615 residues: Protein ENHANCED DISEASE RESISTANCE 4 (615 aa).

Disordered regions lie at residues 46-271 (IAPS…DDDE), 292-336 (YKEQ…GRQG), and 549-592 (THDI…RGSP). Composition is skewed to polar residues over residues 63–89 (NEPQSVPETNNVSSSSGQDTVLPSSPG) and 119–129 (GDGTNEIQEQE). A coiled-coil region spans residues 104–129 (MESTEKELDDLELSNGDGTNEIQEQE). Residues 134–148 (DSEKNEREDNSRLES) show a composition bias toward basic and acidic residues. Over residues 159-168 (GSGSSSGSLS) the composition is skewed to low complexity. Polar residues-rich tracts occupy residues 296-314 (GASSSSPFSENRRNGITTY) and 552-564 (INANRNSNSTSES). A compositionally biased stretch (basic and acidic residues) spans 565-577 (PIDKAPSKPEKLR).

In terms of assembly, interacts with RLK902. Binds and recruits EDR1 at the powdery mildew (e.g. G.cichoracearum) penetration site on the plasma membrane. Interacts with CHC2. In terms of tissue distribution, expressed in stems and rosette leaves, and weakly in inflorescences. Not detected in roots.

It localises to the cell membrane. The protein resides in the endosome. In terms of biological role, plays a negative role in salicylic acid (SA)-mediated resistance to powdery mildew (e.g. Golovinomyces cichoracearum). May modulate plant immunity by regulating the relocation of EDR1 by interacting with CHC2 and modulating endocytosis. The polypeptide is Protein ENHANCED DISEASE RESISTANCE 4 (Arabidopsis thaliana (Mouse-ear cress)).